Reading from the N-terminus, the 144-residue chain is UPF0179 protein PF1381 (144 aa).

The protein belongs to the UPF0179 family.

The polypeptide is UPF0179 protein PF1381 (Pyrococcus furiosus (strain ATCC 43587 / DSM 3638 / JCM 8422 / Vc1)).